Consider the following 1305-residue polypeptide: DNA-directed DNA polymerase (1305 aa).

This sequence belongs to the DNA polymerase type-C family.

It carries out the reaction DNA(n) + a 2'-deoxyribonucleoside 5'-triphosphate = DNA(n+1) + diphosphate. In terms of biological role, replicates viral genomic DNA. The protein is DNA-directed DNA polymerase of Bacillus pumilus (Bacillus mesentericus).